Here is a 476-residue protein sequence, read N- to C-terminus: Homeobox even-skipped homolog protein 2 (476 aa).

2 disordered regions span residues 82-113 (TGSE…AEAD) and 142-185 (KGYA…GSGA). Composition is skewed to low complexity over residues 84 to 96 (SEST…SSAA) and 147 to 159 (SGSA…SASG). Over residues 160–183 (SGLGSLHGGSGGSGGSAALGGSGS) the composition is skewed to gly residues. Residues 188 to 247 (VRRYRTAFTREQIARLEKEFYRENYVSRPRRCELAAALNLPETTIKVWFQNRRMKDKRQR) constitute a DNA-binding region (homeobox).

This sequence belongs to the even-skipped homeobox family.

The protein localises to the nucleus. This chain is Homeobox even-skipped homolog protein 2 (EVX2), found in Homo sapiens (Human).